A 669-amino-acid polypeptide reads, in one-letter code: Cysteine-rich receptor-like protein kinase 34 (669 aa).

The signal sequence occupies residues 1-23 (MKLKISFLPTFLIFLISLDSVTA). Gnk2-homologous domains follow at residues 24-123 (QEIC…NVSF) and 133-246 (ETLY…LYPY). Over 24-285 (QEICFSGFFK…SDRANTTIKG (262 aa)) the chain is Extracellular. Residues N35, N52, N103, N120, N147, N172, N252, and N280 are each glycosylated (N-linked (GlcNAc...) asparagine). The helical transmembrane segment at 286-306 (IIVAIVVPIIVILVSLVVLLV) threads the bilayer. The Cytoplasmic segment spans residues 307 to 669 (VCRRKKSYKT…DASITEFYPR (363 aa)). Residues 345 to 624 (FSDSNMIGRG…MMLTSSTTTL (280 aa)) enclose the Protein kinase domain. Residues 351-359 (IGRGGFGEV) and K373 each bind ATP. Y418 is subject to Phosphotyrosine. The Proton acceptor role is filled by D470. S474 carries the phosphoserine modification. Phosphothreonine is present on T510. Residue Y518 is modified to Phosphotyrosine.

Belongs to the protein kinase superfamily. Ser/Thr protein kinase family. CRK subfamily.

It localises to the membrane. It catalyses the reaction L-seryl-[protein] + ATP = O-phospho-L-seryl-[protein] + ADP + H(+). The catalysed reaction is L-threonyl-[protein] + ATP = O-phospho-L-threonyl-[protein] + ADP + H(+). The chain is Cysteine-rich receptor-like protein kinase 34 from Arabidopsis thaliana (Mouse-ear cress).